A 476-amino-acid polypeptide reads, in one-letter code: Glutamyl-tRNA(Gln) amidotransferase subunit A (476 aa).

Residues lysine 76 and serine 151 each act as charge relay system in the active site. The active-site Acyl-ester intermediate is serine 175.

Belongs to the amidase family. GatA subfamily. In terms of assembly, heterotrimer of A, B and C subunits.

The enzyme catalyses L-glutamyl-tRNA(Gln) + L-glutamine + ATP + H2O = L-glutaminyl-tRNA(Gln) + L-glutamate + ADP + phosphate + H(+). Allows the formation of correctly charged Gln-tRNA(Gln) through the transamidation of misacylated Glu-tRNA(Gln) in organisms which lack glutaminyl-tRNA synthetase. The reaction takes place in the presence of glutamine and ATP through an activated gamma-phospho-Glu-tRNA(Gln). This Chlorobium phaeobacteroides (strain DSM 266 / SMG 266 / 2430) protein is Glutamyl-tRNA(Gln) amidotransferase subunit A.